Reading from the N-terminus, the 387-residue chain is Putative serine/threonine-protein kinase (387 aa).

The Protein kinase domain occupies 15–344 (YQIEKLLNRG…ERVLEGQVEI (330 aa)). ATP contacts are provided by residues 21–29 (LNRGGMDSY) and lysine 55. Aspartate 164 acts as the Proton acceptor in catalysis. 2 consecutive transmembrane segments (helical) span residues 232-252 (PPNAQYDIYSLGIILFEMLVG) and 363-383 (SIFTIVFIGLIIAAIVLLLIF).

This sequence belongs to the protein kinase superfamily. Ser/Thr protein kinase family.

The protein localises to the cell membrane. It catalyses the reaction L-seryl-[protein] + ATP = O-phospho-L-seryl-[protein] + ADP + H(+). The catalysed reaction is L-threonyl-[protein] + ATP = O-phospho-L-threonyl-[protein] + ADP + H(+). The polypeptide is Putative serine/threonine-protein kinase (Mycoplasma genitalium (strain ATCC 33530 / DSM 19775 / NCTC 10195 / G37) (Mycoplasmoides genitalium)).